The sequence spans 300 residues: Protease HtpX homolog (300 aa).

2 helical membrane passes run 5-25 (IFLL…FISL) and 41-61 (TLFL…LAIS). His-146 provides a ligand contact to Zn(2+). The active site involves Glu-147. A Zn(2+)-binding site is contributed by His-150. The next 2 helical transmembrane spans lie at 161-181 (LLQG…GFFV) and 196-216 (IGFY…ASII). Glu-225 is a Zn(2+) binding site.

This sequence belongs to the peptidase M48B family. Requires Zn(2+) as cofactor.

It localises to the cell inner membrane. This Methylacidiphilum infernorum (isolate V4) (Methylokorus infernorum (strain V4)) protein is Protease HtpX homolog.